We begin with the raw amino-acid sequence, 378 residues long: 1-acyl-sn-glycerol-3-phosphate acyltransferase delta (378 aa).

The chain crosses the membrane as a helical span at residues 11 to 31 (FLCHLVFCYVFIASGLIINTV). The HXXXXD motif signature appears at 96–101 (HKFEID). Helical transmembrane passes span 125–145 (ELAYVPIIGWMWYFTEMVFCS), 307–327 (TLVNWLFWASLVLYPFFQFLV), and 338–358 (LASFILVFFVASMGVRWMIGV).

It belongs to the 1-acyl-sn-glycerol-3-phosphate acyltransferase family.

The protein resides in the endoplasmic reticulum membrane. It carries out the reaction a 1-acyl-sn-glycero-3-phosphate + an acyl-CoA = a 1,2-diacyl-sn-glycero-3-phosphate + CoA. It catalyses the reaction (4Z,7Z,10Z,13Z,16Z,19Z)-docosahexaenoyl-CoA + 1-hexadecanoyl-sn-glycero-3-phosphate = 1-hexadecanoyl-2-(4Z,7Z,10Z,13Z,16Z,19Z-docosahexaenoyl)-sn-glycero-3-phosphate + CoA. The catalysed reaction is 1-octadecanoyl-sn-glycero-3-phosphate + (9Z,12Z)-octadecadienoyl-CoA = 1-octadecanoyl-2-(9Z,12Z-octadecadienoyl)-sn-glycero-3-phosphate + CoA. The enzyme catalyses 1-octadecanoyl-sn-glycero-3-phosphate + (4Z,7Z,10Z,13Z,16Z,19Z)-docosahexaenoyl-CoA = 1-octadecanoyl-2-(4Z,7Z,10Z,13Z,16Z,19Z-docosahexaenoyl)-sn-glycero-3-phosphate + CoA. It carries out the reaction (4Z,7Z,10Z,13Z,16Z,19Z)-docosahexaenoyl-CoA + 1-(9Z-octadecenoyl)-sn-glycero-3-phosphate = 1-(9Z-octadecenoyl)-2-(4Z,7Z,10Z,13Z,16Z,19Z-docosahexaenoyl)-sn-glycero-3-phosphate + CoA. Its pathway is phospholipid metabolism; CDP-diacylglycerol biosynthesis; CDP-diacylglycerol from sn-glycerol 3-phosphate: step 2/3. Converts 1-acyl-sn-glycerol-3-phosphate (lysophosphatidic acid or LPA) into 1,2-diacyl-sn-glycerol-3-phosphate (phosphatidic acid or PA) by incorporating an acyl moiety at the sn-2 position of the glycerol backbone. Exhibits high acyl-CoA specificity for polyunsaturated fatty acyl-CoA, especially docosahexaenoyl-CoA (22:6-CoA, DHA-CoA). The protein is 1-acyl-sn-glycerol-3-phosphate acyltransferase delta (AGPAT4) of Macaca fascicularis (Crab-eating macaque).